A 418-amino-acid polypeptide reads, in one-letter code: ORC1-type DNA replication protein 2 (418 aa).

ATP-binding positions include 72 to 76 (TGKTV), Tyr218, and Arg230.

The protein belongs to the CDC6/cdc18 family.

Its function is as follows. Involved in regulation of DNA replication. This chain is ORC1-type DNA replication protein 2 (cdc6-2), found in Sulfurisphaera tokodaii (strain DSM 16993 / JCM 10545 / NBRC 100140 / 7) (Sulfolobus tokodaii).